A 323-amino-acid polypeptide reads, in one-letter code: AA9 family lytic polysaccharide monooxygenase B (323 aa).

Residues 1 to 18 (MKSFTLTTLAALAGNAAA) form the signal peptide. 2 residues coordinate Cu(2+): His-19 and His-97. A disulfide bridge connects residues Cys-56 and Cys-191. O2-binding residues include His-177 and Gln-186. Tyr-188 contacts Cu(2+). Positions 286 to 323 (CTVQKYQQCGGQGYTGCTNCASGSTCSAVSPPYYSQCV) constitute a CBM1 domain.

This sequence belongs to the polysaccharide monooxygenase AA9 family. Requires Cu(2+) as cofactor.

The protein localises to the secreted. The enzyme catalyses [(1-&gt;4)-beta-D-glucosyl]n+m + reduced acceptor + O2 = 4-dehydro-beta-D-glucosyl-[(1-&gt;4)-beta-D-glucosyl]n-1 + [(1-&gt;4)-beta-D-glucosyl]m + acceptor + H2O.. Is able to utilize various natural phenolic compounds as reducing agents. Most of these reducing agents are present in plants, either free or as lignin building blocks, such as sinapic acid, or as flavonoids such as catechin and dopamine. Phenolic compounds with 1,2-benzenediol and 1,2,3-benzenetriol moieties yield the highest release of oxidized and non-oxidized glucooligosaccharides from cellulose compared to monophenols or sulfur-containing compounds. Its function is as follows. Lytic polysaccharide monooxygenase (LPMO) that depolymerizes crystalline and amorphous polysaccharides via the oxidation of scissile alpha- or beta-(1-4)-glycosidic bonds, yielding C1 oxidation products. Catalysis by LPMOs requires the reduction of the active-site copper from Cu(II) to Cu(I) by a reducing agent and H(2)O(2) or O(2) as a cosubstrate. Is active on regenerated amorphous cellulose (RAC). This is AA9 family lytic polysaccharide monooxygenase B from Thermothelomyces thermophilus (strain ATCC 42464 / BCRC 31852 / DSM 1799) (Sporotrichum thermophile).